The following is a 982-amino-acid chain: Probable beta-galactosidase C (982 aa).

Positions 1 to 21 (MRLFALLPVLLGLISSHFVSA) are cleaved as a signal peptide. 5 residues coordinate substrate: tyrosine 80, asparagine 125, alanine 126, glutamate 127, and asparagine 185. Catalysis depends on glutamate 186, which acts as the Proton donor. Tyrosine 249 is a binding site for substrate. Cysteine 255 and cysteine 302 are joined by a disulfide. A glycan (N-linked (GlcNAc...) asparagine) is linked at asparagine 274. Glutamate 285 functions as the Nucleophile in the catalytic mechanism. Position 351 (tyrosine 351) interacts with substrate. N-linked (GlcNAc...) asparagine glycosylation is found at asparagine 389, asparagine 434, asparagine 600, asparagine 675, asparagine 718, and asparagine 785.

It belongs to the glycosyl hydrolase 35 family.

The protein resides in the secreted. The enzyme catalyses Hydrolysis of terminal non-reducing beta-D-galactose residues in beta-D-galactosides.. In terms of biological role, cleaves beta-linked terminal galactosyl residues from gangliosides, glycoproteins, and glycosaminoglycans. The chain is Probable beta-galactosidase C (lacC) from Penicillium rubens (strain ATCC 28089 / DSM 1075 / NRRL 1951 / Wisconsin 54-1255) (Penicillium chrysogenum).